A 479-amino-acid polypeptide reads, in one-letter code: Aspartyl/glutamyl-tRNA(Asn/Gln) amidotransferase subunit B (479 aa).

It belongs to the GatB/GatE family. GatB subfamily. As to quaternary structure, heterotrimer of A, B and C subunits.

The enzyme catalyses L-glutamyl-tRNA(Gln) + L-glutamine + ATP + H2O = L-glutaminyl-tRNA(Gln) + L-glutamate + ADP + phosphate + H(+). It catalyses the reaction L-aspartyl-tRNA(Asn) + L-glutamine + ATP + H2O = L-asparaginyl-tRNA(Asn) + L-glutamate + ADP + phosphate + 2 H(+). In terms of biological role, allows the formation of correctly charged Asn-tRNA(Asn) or Gln-tRNA(Gln) through the transamidation of misacylated Asp-tRNA(Asn) or Glu-tRNA(Gln) in organisms which lack either or both of asparaginyl-tRNA or glutaminyl-tRNA synthetases. The reaction takes place in the presence of glutamine and ATP through an activated phospho-Asp-tRNA(Asn) or phospho-Glu-tRNA(Gln). This chain is Aspartyl/glutamyl-tRNA(Asn/Gln) amidotransferase subunit B, found in Streptococcus pyogenes serotype M49 (strain NZ131).